The chain runs to 308 residues: SAP30-binding protein (308 aa).

Positions alanine 15–leucine 101 are disordered. Serine 18, serine 22, serine 43, and serine 52 each carry phosphoserine. The segment covering aspartate 57–glutamate 78 has biased composition (acidic residues). A compositionally biased stretch (basic and acidic residues) spans threonine 79–glutamine 99. Lysine 95 participates in a covalent cross-link: Glycyl lysine isopeptide (Lys-Gly) (interchain with G-Cter in SUMO2). The residue at position 113 (serine 113) is a Phosphoserine. Residues lysine 220, lysine 304, and lysine 305 each participate in a glycyl lysine isopeptide (Lys-Gly) (interchain with G-Cter in SUMO2) cross-link.

It belongs to the HCNGP family. In terms of assembly, interacts with histone deacetylase complex subunit SAP30.

Its subcellular location is the nucleus. In terms of biological role, plays a role in transcriptional repression by promoting histone deacetylase activity, leading to deacetylation of histone H3. May be involved in the regulation of beta-2-microglobulin genes. This Mus musculus (Mouse) protein is SAP30-binding protein (Sap30bp).